We begin with the raw amino-acid sequence, 353 residues long: ATP-dependent kinase YFH7 (353 aa).

Residue glycine 31 to threonine 39 participates in ATP binding.

It belongs to the YFH7 family.

Functionally, ATP-dependent kinase that could be involved in endoplasmic reticulum membrane assembly. This Kluyveromyces lactis (strain ATCC 8585 / CBS 2359 / DSM 70799 / NBRC 1267 / NRRL Y-1140 / WM37) (Yeast) protein is ATP-dependent kinase YFH7 (YFH7).